The chain runs to 292 residues: Ribosomal protein L11 methyltransferase (292 aa).

S-adenosyl-L-methionine is bound by residues threonine 143, glycine 164, aspartate 186, and asparagine 228.

Belongs to the methyltransferase superfamily. PrmA family.

It localises to the cytoplasm. It catalyses the reaction L-lysyl-[protein] + 3 S-adenosyl-L-methionine = N(6),N(6),N(6)-trimethyl-L-lysyl-[protein] + 3 S-adenosyl-L-homocysteine + 3 H(+). Methylates ribosomal protein L11. This is Ribosomal protein L11 methyltransferase from Tolumonas auensis (strain DSM 9187 / NBRC 110442 / TA 4).